A 500-amino-acid polypeptide reads, in one-letter code: Cytochrome P450 2D26 (500 aa).

Residue S249 is modified to Phosphoserine. C446 contributes to the heme binding site.

The protein belongs to the cytochrome P450 family. It depends on heme as a cofactor.

It localises to the endoplasmic reticulum membrane. The protein resides in the microsome membrane. The enzyme catalyses an organic molecule + reduced [NADPH--hemoprotein reductase] + O2 = an alcohol + oxidized [NADPH--hemoprotein reductase] + H2O + H(+). In terms of biological role, cytochromes P450 are a group of heme-thiolate monooxygenases. In liver microsomes, this enzyme is involved in an NADPH-dependent electron transport pathway. It oxidizes a variety of structurally unrelated compounds, including steroids, fatty acids, and xenobiotics. The sequence is that of Cytochrome P450 2D26 (Cyp2d26) from Rattus norvegicus (Rat).